Here is a 485-residue protein sequence, read N- to C-terminus: Transcription factor E2FA (485 aa).

Over residues 1-11 (MSGVVRSSPGS) the composition is skewed to low complexity. 2 disordered regions span residues 1–69 (MSGV…SNNN) and 114–159 (SGFT…SPIT). Residues 12–26 (SQPPPPPPHHPPSSP) are compositionally biased toward pro residues. Residues 114–125 (SGFTNIPSSPCQ) are compositionally biased toward polar residues. Residues 129–141 (KGGRVNIKSKAKG) show a composition bias toward basic residues. Positions 142 to 159 (NKSTPQTPISTNAGSPIT) are enriched in polar residues. Residues 167–232 (RYDSSLGLLT…PFKNRILWKG (66 aa)) mediate DNA binding. Positions 245-286 (SVLQLQAEIENLALEEQALDNQIRQTEERLRDLSENEKNQKW) form a coiled coil. A leucine-zipper region spans residues 249-277 (LQAEIENLALEEQALDNQIRQTEERLRDL). A retinoblastoma protein binding region spans residues 435–450 (DYWLLSNAEISMTDIW).

Belongs to the E2F/DP family. As to quaternary structure, heterodimer with DP proteins. Interacts (via dimerization domain) preferentially with DPA, but also with DPB. Interacts with maize retinoblastoma-related protein RBR1. No interaction with E2FD. As to expression, highly expressed in the shoot apical meristem, emerging leaf primordia, and vascular tissues of young leaf primordia. Expressed in flowers, in epidermis and cortex of hypocotyls, and at lower levels in leaves.

It localises to the cytoplasm. It is found in the nucleus. In terms of biological role, transcription activator that binds DNA cooperatively with DP proteins through the E2 recognition site, 5'-TTTC[CG]CGC-3' found in the promoter region of a number of genes whose products are involved in cell cycle regulation or in DNA replication. The binding of retinoblastoma-related proteins represses transactivation. Regulates gene expression both positively and negatively. Activates the expression of E2FB. Involved in the control of cell-cycle progression from G1 to S phase. Stimulates cell proliferation and delays differentiation. In Arabidopsis thaliana (Mouse-ear cress), this protein is Transcription factor E2FA (E2FA).